Here is a 348-residue protein sequence, read N- to C-terminus: UPF0324 membrane protein BPP3732 (348 aa).

10 helical membrane-spanning segments follow: residues 20–39 (GILFVALMAAAVVQLADLPF), 43–62 (FGFSPLVVGIVCGMLYGNFL), 98–120 (IAAVGLPGLAVSVGVVASTLLIG), 135–157 (AMLTAAGSAICGAAAVLAFEPTL), 164–186 (SAVAVATVVLFGTLSMFLYPVIY), 196–215 (QALGIYIGGTVHEVAQVVGA), 235–257 (VALLVPVLLVLGFWLRASAAAGA), 267–286 (VPWFAIGFLVLAIVNSLDIL), 299–318 (VFVLTMAMTALGIETRFAQI), and 322–344 (GPRVMALGLVLYAWLVFGGYGIV).

Belongs to the UPF0324 family.

Its subcellular location is the cell membrane. This chain is UPF0324 membrane protein BPP3732, found in Bordetella parapertussis (strain 12822 / ATCC BAA-587 / NCTC 13253).